The following is an 88-amino-acid chain: Long neurotoxin LNTX-2 (88 aa).

Positions 1 to 21 (MKTLLLTLVVVTIVCLDFGYA) are cleaved as a signal peptide. 4 cysteine pairs are disulfide-bonded: Cys-24–Cys-42, Cys-35–Cys-63, Cys-67–Cys-78, and Cys-79–Cys-84.

Belongs to the three-finger toxin family. Long-chain subfamily. Type II alpha-neurotoxin sub-subfamily. As to expression, expressed by the venom gland.

The protein resides in the secreted. Functionally, binds with high affinity to muscular nicotinic acetylcholine receptors (nAChRs), whereas it binds with a low affinity to neuronal alpha-7/CHRNA7 nAChRs. This chain is Long neurotoxin LNTX-2, found in Demansia vestigiata (Lesser black whip snake).